A 245-amino-acid polypeptide reads, in one-letter code: 4-hydroxy-tetrahydrodipicolinate reductase (245 aa).

NAD(+) is bound by residues 7–12 (GAKGKV), 75–77 (GTT), and 102–105 (APNF). The active-site Proton donor/acceptor is the His-132. His-133 contacts (S)-2,3,4,5-tetrahydrodipicolinate. The active-site Proton donor is Lys-136. A (S)-2,3,4,5-tetrahydrodipicolinate-binding site is contributed by 142 to 143 (GT).

It belongs to the DapB family.

Its subcellular location is the cytoplasm. The catalysed reaction is (S)-2,3,4,5-tetrahydrodipicolinate + NAD(+) + H2O = (2S,4S)-4-hydroxy-2,3,4,5-tetrahydrodipicolinate + NADH + H(+). It carries out the reaction (S)-2,3,4,5-tetrahydrodipicolinate + NADP(+) + H2O = (2S,4S)-4-hydroxy-2,3,4,5-tetrahydrodipicolinate + NADPH + H(+). It functions in the pathway amino-acid biosynthesis; L-lysine biosynthesis via DAP pathway; (S)-tetrahydrodipicolinate from L-aspartate: step 4/4. Catalyzes the conversion of 4-hydroxy-tetrahydrodipicolinate (HTPA) to tetrahydrodipicolinate. This Mycobacterium tuberculosis (strain ATCC 25177 / H37Ra) protein is 4-hydroxy-tetrahydrodipicolinate reductase.